Here is a 404-residue protein sequence, read N- to C-terminus: Cystinosin homolog (404 aa).

At 20 to 123 (TNNLVVRQKE…FARITVIRSH (104 aa)) the chain is on the lumenal side. N-linked (GlcNAc...) asparagine glycosylation is found at N46, N53, N79, and N97. The helical transmembrane segment at 124–144 (FLAILIQIVGWTYFFAWSISF) threads the bilayer. The PQ-loop 1 domain occupies 125-191 (LAILIQIVGW…MYYNSHVKNE (67 aa)). The Cytoplasmic portion of the chain corresponds to 145 to 163 (YPQMYLNFKRKSVVGLNFD). The helical transmembrane segment at 164 to 184 (FLSLNLVGFCAYAIFNLLMYY) threads the bilayer. Residues 185-207 (NSHVKNEYNIVNPRSPPPVLLND) are Lumenal-facing. A helical membrane pass occupies residues 208–228 (VVFAVHAFLACFITILQCLFY). Topologically, residues 229–238 (ERDNQSVSSK) are cytoplasmic. The chain crosses the membrane as a helical span at residues 239–259 (CIALMIVLISFGFCSAAATVL). At 260–263 (RKIQ) the chain is on the lumenal side. The helical transmembrane segment at 264 to 285 (LLSFVTSLSYIKMAVTCCKYFP) threads the bilayer. A PQ-loop 2 domain is found at 266-327 (SFVTSLSYIK…MILQAVNVND (62 aa)). The Cytoplasmic portion of the chain corresponds to 286 to 295 (QAYFNYTRKS). A helical transmembrane segment spans residues 296-316 (TVGWSIGNIMLDFTGGTLDIL). Over 317 to 337 (QMILQAVNVNDWSAFYANPVK) the chain is Lumenal. A helical transmembrane segment spans residues 338–358 (FGLGFVSIFFDIIFMVQHYVL). Residues 359 to 404 (YPNAEVPHNEYHGVDNPNPDNIARDAEQYAGDSESMESTEPIIVHD) lie on the Cytoplasmic side of the membrane.

It belongs to the cystinosin family.

Its subcellular location is the lysosome membrane. The protein localises to the cytoplasmic vesicle. The protein resides in the phagosome. It carries out the reaction L-cystine(out) + H(+)(out) = L-cystine(in) + H(+)(in). Cystine/H(+) symporter that mediates export of cystine, the oxidized dimer of cysteine, from lysosomes. May play a role in the degradation of engulfed apoptotic cells. The chain is Cystinosin homolog (ctns-1) from Caenorhabditis elegans.